The primary structure comprises 450 residues: UPF0210 protein CPE1497 (450 aa).

It belongs to the UPF0210 family. As to quaternary structure, homodimer.

This Clostridium perfringens (strain 13 / Type A) protein is UPF0210 protein CPE1497.